The primary structure comprises 219 residues: Ras-related protein Rab-3D (219 aa).

Alanine 2 carries the post-translational modification N-acetylalanine. 29–37 (GNSSVGKTS) is a GDP binding site. GTP is bound by residues serine 31, serine 32, valine 33, glycine 34, lysine 35, threonine 36, serine 37, proline 49, and serine 53. Residue threonine 36 participates in Mg(2+) binding. The short motif at 49-58 (PAFVSTVGID) is the Switch 1 element. The Mg(2+) site is built by threonine 54 and aspartate 77. A GTP-binding site is contributed by glycine 80. Positions 80–96 (GQERYRTITTAYYRGAM) match the Switch 2 motif. Phosphothreonine; by LRRK2 is present on threonine 86. Asparagine 135, lysine 136, aspartate 138, alanine 166, and lysine 167 together coordinate GTP. Residues 135–138 (NKCD) and 165–167 (SAK) contribute to the GDP site. At serine 190 the chain carries Phosphoserine. Residues 190–199 (SLEPSSSSGS) are compositionally biased toward low complexity. The segment at 190-219 (SLEPSSSSGSNGKGPAVGDAPAPQPSSCSC) is disordered. Residues cysteine 217 and cysteine 219 are each lipidated (S-geranylgeranyl cysteine). Cysteine 219 bears the Cysteine methyl ester mark.

This sequence belongs to the small GTPase superfamily. Rab family. As to quaternary structure, interacts with RIMS1, RIMS2, RPH3A, RPH3AL and RAB3IP. The GTP-bound form interacts with REP15. Interacts with CHM and CHML; phosphorylation at Thr-86 disrupts these interactions. Interacts with MADD (via uDENN domain); the GTP-bound form is preferred for interaction. Mg(2+) is required as a cofactor. Post-translationally, phosphorylation of Thr-86 in the switch II region by LRRK2 prevents the association of RAB regulatory proteins, including CHM and CHML. As to expression, highly expressed in granulocytes of peripheral blood. Constitutively expressed at low levels in all hematopoietic cell lines investigated.

The protein localises to the cell membrane. It carries out the reaction GTP + H2O = GDP + phosphate + H(+). Its activity is regulated as follows. Regulated by guanine nucleotide exchange factors (GEFs) which promote the exchange of bound GDP for free GTP. Regulated by GTPase activating proteins (GAPs) which increase the GTP hydrolysis activity. Inhibited by GDP dissociation inhibitors (GDIs) which prevent Rab-GDP dissociation. Functionally, the small GTPases Rab are key regulators of intracellular membrane trafficking, from the formation of transport vesicles to their fusion with membranes. Rabs cycle between an inactive GDP-bound form and an active GTP-bound form that is able to recruit to membranes different sets of downstream effectors directly responsible for vesicle formation, movement, tethering and fusion. RAB3D may be involved in the insulin-induced exocytosis of GLUT4-containing vesicles in adipocytes. The protein is Ras-related protein Rab-3D of Homo sapiens (Human).